A 112-amino-acid polypeptide reads, in one-letter code: Ribosomal processing cysteine protease Prp (112 aa).

Residue H22 is the Proton donor of the active site. C34 acts as the Nucleophile in catalysis.

This sequence belongs to the Prp family. As to quaternary structure, homodimer.

An essential cysteine protease that cleaves the N-terminus from ribosomal protein bL27. The sequence is that of Ribosomal processing cysteine protease Prp from Bacillus subtilis (strain 168).